A 197-amino-acid chain; its full sequence is Putative protein N5-glutamine methyltransferase MJ0928 (197 aa).

S-adenosyl-L-methionine-binding positions include 42 to 46, D64, and N105; that span reads GVGTG. Position 105-108 (105-108) interacts with substrate; that stretch reads NPPY.

Belongs to the eukaryotic/archaeal PrmC-related family.

It carries out the reaction L-glutaminyl-[protein] + S-adenosyl-L-methionine = N(5)-methyl-L-glutaminyl-[protein] + S-adenosyl-L-homocysteine + H(+). Its function is as follows. Putative protein methyltransferase using S-adenosyl-L-methionine as the methyl donor. May methylate a Gln residue in target proteins. The sequence is that of Putative protein N5-glutamine methyltransferase MJ0928 from Methanocaldococcus jannaschii (strain ATCC 43067 / DSM 2661 / JAL-1 / JCM 10045 / NBRC 100440) (Methanococcus jannaschii).